The following is a 228-amino-acid chain: L-ribulose-5-phosphate 4-epimerase UlaF (228 aa).

Substrate-binding positions include 26–27 (GN), 43–44 (SG), and 72–73 (SS). 3 residues coordinate Zn(2+): Asp-74, His-93, and His-95. Asp-118 acts as the Proton donor/acceptor in catalysis. His-167 contacts Zn(2+). Tyr-225 serves as the catalytic Proton donor/acceptor.

It belongs to the aldolase class II family. AraD/FucA subfamily. Requires Zn(2+) as cofactor.

The catalysed reaction is L-ribulose 5-phosphate = D-xylulose 5-phosphate. It participates in cofactor degradation; L-ascorbate degradation; D-xylulose 5-phosphate from L-ascorbate: step 4/4. In terms of biological role, catalyzes the isomerization of L-ribulose 5-phosphate to D-xylulose 5-phosphate. Is involved in the anaerobic L-ascorbate utilization. The polypeptide is L-ribulose-5-phosphate 4-epimerase UlaF (Escherichia coli (strain K12 / MC4100 / BW2952)).